Consider the following 348-residue polypeptide: Eukaryotic translation initiation factor 3 subunit H (348 aa).

An MPN domain is found at 35–169; the sequence is VQIDGLVVLK…LKAYRLTPKL (135 aa). Over residues 267–285 the composition is skewed to low complexity; sequence QQQKHQYQQRRQQENIQRQ. Residues 267-311 are disordered; that stretch reads QQQKHQYQQRRQQENIQRQSRGEPPLPEEDINKLFKPPQPPPRME.

Belongs to the eIF-3 subunit H family. Component of the eukaryotic translation initiation factor 3 (eIF-3) complex, which is composed of 13 subunits: EIF3A, EIF3B, EIF3C, EIF3D, EIF3E, EIF3F, EIF3G, EIF3H, EIF3I, EIF3J, EIF3K, EIF3L and EIF3M.

It is found in the cytoplasm. Functionally, component of the eukaryotic translation initiation factor 3 (eIF-3) complex, which is involved in protein synthesis of a specialized repertoire of mRNAs and, together with other initiation factors, stimulates binding of mRNA and methionyl-tRNAi to the 40S ribosome. The eIF-3 complex specifically targets and initiates translation of a subset of mRNAs involved in cell proliferation. The protein is Eukaryotic translation initiation factor 3 subunit H of Taeniopygia guttata (Zebra finch).